A 297-amino-acid polypeptide reads, in one-letter code: 3-mercaptopyruvate sulfurtransferase (297 aa).

Position 2 is an N-acetylalanine (alanine 2). One can recognise a Rhodanese 1 domain in the interval 25-144; the sequence is SSQPLKLLDA…WLNQNLPISS (120 aa). Serine 35 is subject to Phosphoserine. N6-acetyllysine; alternate is present on lysine 40. The residue at position 40 (lysine 40) is an N6-succinyllysine; alternate. The tract at residues 145 to 160 is hinge; the sequence is GKSHSEPAEFSAQLDP. An N6-succinyllysine mark is found at lysine 146 and lysine 164. The Rhodanese 2 domain occupies 174–288; the sequence is DARRFQVVDA…WYMRAQPEHI (115 aa). A substrate-binding site is contributed by arginine 188. Cysteine 248 acts as the Cysteine persulfide intermediate in catalysis.

Monomer (active form). Homodimer; disulfide-linked (inactive form). In terms of tissue distribution, expressed in the brain and retina. In the retina, localized to the inner and outer plexiform layer, the inner and outer nuclear layer and the outer segments of photoreceptors. In the brain, localized to neurons of mitral cell layers, glomerular, and external plexiform layers in the olfactory bulb. Also found in Purkinje cell stomata and proximal dendrites. In the spinal cord, localized to large neurons. In the cerebral cortex, localized to pyramidial neurons in layers II/III and V, and in layers I-VI of neocortical areas. In the hippocampus, found in CA1 and CA3 pyramidal cells.

It localises to the cytoplasm. Its subcellular location is the mitochondrion. It is found in the synapse. The protein localises to the synaptosome. The enzyme catalyses 2-oxo-3-sulfanylpropanoate + [thioredoxin]-dithiol = [thioredoxin]-disulfide + hydrogen sulfide + pyruvate + H(+). By oxidative stress, and thioredoxin. Under oxidative stress conditions, the catalytic cysteine site is converted to a sulfenate which inhibits the MPST enzyme activity. Reduced thioredoxin cleaves an intersubunit disulfide bond to turn on the redox switch and reactivate the enzyme. Inhibited by different oxidants, hydrogen peroxide and tetrathionate. In terms of biological role, transfer of a sulfur ion to cyanide or to other thiol compounds. Also has weak rhodanese activity. Detoxifies cyanide and is required for thiosulfate biosynthesis. Acts as an antioxidant. In combination with cysteine aminotransferase (CAT), contributes to the catabolism of cysteine and is an important producer of hydrogen sulfide in the brain, retina and vascular endothelial cells. Hydrogen sulfide H(2)S is an important synaptic modulator, signaling molecule, smooth muscle contractor and neuroprotectant. Its production by the 3MST/CAT pathway is regulated by calcium ions. The sequence is that of 3-mercaptopyruvate sulfurtransferase (Mpst) from Mus musculus (Mouse).